The chain runs to 890 residues: Leucine--tRNA ligase (890 aa).

Residues 48 to 58 (PYPSGKLHMGH) carry the 'HIGH' region motif. The 'KMSKS' region signature appears at 645–649 (KMSKS). Lys-648 is an ATP binding site.

Belongs to the class-I aminoacyl-tRNA synthetase family.

It localises to the cytoplasm. It carries out the reaction tRNA(Leu) + L-leucine + ATP = L-leucyl-tRNA(Leu) + AMP + diphosphate. The chain is Leucine--tRNA ligase from Polynucleobacter necessarius subsp. necessarius (strain STIR1).